A 582-amino-acid polypeptide reads, in one-letter code: Aspartate--tRNA ligase (582 aa).

Glutamate 174 lines the L-aspartate pocket. The segment at 198–201 (QITK) is aspartate. Arginine 220 contacts L-aspartate. Residues 220-222 (RDE) and glutamine 229 each bind ATP. Histidine 443 lines the L-aspartate pocket. Residue glutamate 477 coordinates ATP. Residue arginine 484 participates in L-aspartate binding. 529–532 (GLDR) is an ATP binding site.

Belongs to the class-II aminoacyl-tRNA synthetase family. Type 1 subfamily. As to quaternary structure, homodimer.

Its subcellular location is the cytoplasm. The enzyme catalyses tRNA(Asp) + L-aspartate + ATP = L-aspartyl-tRNA(Asp) + AMP + diphosphate. Functionally, catalyzes the attachment of L-aspartate to tRNA(Asp) in a two-step reaction: L-aspartate is first activated by ATP to form Asp-AMP and then transferred to the acceptor end of tRNA(Asp). The sequence is that of Aspartate--tRNA ligase from Streptococcus pyogenes serotype M18 (strain MGAS8232).